Reading from the N-terminus, the 72-residue chain is uncharacterized protein (72 aa).

Residues 27–55 (YTQNLINELQEARDSINDLQRAHERLKLV) are a coiled coil.

This is an uncharacterized protein from Schizosaccharomyces pombe (strain 972 / ATCC 24843) (Fission yeast).